The primary structure comprises 346 residues: Phenylalanine--tRNA ligase alpha subunit (346 aa).

E261 is a Mg(2+) binding site.

Belongs to the class-II aminoacyl-tRNA synthetase family. Phe-tRNA synthetase alpha subunit type 1 subfamily. In terms of assembly, tetramer of two alpha and two beta subunits. Mg(2+) is required as a cofactor.

It is found in the cytoplasm. It catalyses the reaction tRNA(Phe) + L-phenylalanine + ATP = L-phenylalanyl-tRNA(Phe) + AMP + diphosphate + H(+). The polypeptide is Phenylalanine--tRNA ligase alpha subunit (Dehalococcoides mccartyi (strain ATCC BAA-2100 / JCM 16839 / KCTC 5957 / BAV1)).